Reading from the N-terminus, the 414-residue chain is NAD-specific glutamate dehydrogenase (414 aa).

Lys-70 and Lys-94 together coordinate substrate. The active-site Proton donor is Lys-106. Positions 190 and 221 each coordinate NAD(+). Residue Ser-348 coordinates substrate.

Belongs to the Glu/Leu/Phe/Val dehydrogenases family. As to quaternary structure, homohexamer.

It carries out the reaction L-glutamate + NAD(+) + H2O = 2-oxoglutarate + NH4(+) + NADH + H(+). The protein is NAD-specific glutamate dehydrogenase (gluD) of Staphylococcus aureus (strain COL).